The following is a 433-amino-acid chain: Ornithine decarboxylase, chloroplastic (433 aa).

K96 carries the post-translational modification N6-(pyridoxal phosphate)lysine. Residues S228, G266, and 299–302 (EPGR) each bind pyridoxal 5'-phosphate. A substrate-binding site is contributed by 342-343 (YD). C378 acts as the Proton donor; shared with dimeric partner in catalysis. Position 379 (D379) interacts with substrate. Y407 is a pyridoxal 5'-phosphate binding site.

The protein belongs to the Orn/Lys/Arg decarboxylase class-II family. In terms of assembly, homodimer. Only the dimer is catalytically active, as the active sites are constructed of residues from both monomers. Pyridoxal 5'-phosphate is required as a cofactor.

The protein resides in the plastid. It is found in the chloroplast. It carries out the reaction L-ornithine + H(+) = putrescine + CO2. It participates in alkaloid biosynthesis; nicotine biosynthesis. It functions in the pathway amine and polyamine biosynthesis; putrescine biosynthesis via L-ornithine pathway; putrescine from L-ornithine: step 1/1. In terms of biological role, involved in the biosynthesis of pyridine alkaloid natural products, leading mainly to the production of anabasine, anatabine, nicotine and nornicotine, effective deterrents against herbivores with antiparasitic and pesticide properties (neurotoxins); nornicotine serves as the precursor in the synthesis of the carcinogen compound N'-nitrosonornicotine (NNN). Catalyzes the first and rate-limiting step of polyamine biosynthesis that converts ornithine into putrescine, which is the precursor for the polyamines, spermidine and spermine. Polyamines are essential for cell proliferation and are implicated in cellular processes, ranging from DNA replication to apoptosis. This is Ornithine decarboxylase, chloroplastic from Nicotiana glauca (Glaucous tobacco).